The sequence spans 332 residues: Apoptosis-enhancing nuclease (332 aa).

A disordered region spans residues 1–102 (MVPREVPESS…VPREAPSSGP (102 aa)). Positions 20 to 36 (ARRRHKRRSRQHQRFMA) are enriched in basic residues. Residues 21-29 (RRRHKRRSR) carry the Nucleolar localization signal motif. The span at 63 to 73 (QTPAGTEASGN) shows a compositional bias: polar residues. One can recognise an Exonuclease domain in the interval 105 to 261 (YVAIDCEMVG…EDAMTAMELY (157 aa)). A Nuclear localization signal motif is present at residues 160–183 (RQHMHKAIPFQVAQKEILKLLKGK). The segment at 272–332 (VASTAKAHPE…EGQGARSAPP (61 aa)) is disordered. The span at 310–321 (GDTREAQDRQEG) shows a compositional bias: basic and acidic residues.

Its subcellular location is the nucleus. It localises to the nucleolus. Exonuclease with activity against single- and double-stranded DNA and RNA. Mediates p53-induced apoptosis. When induced by p53 following DNA damage, digests double-stranded DNA to form single-stranded DNA and amplifies DNA damage signals, leading to enhancement of apoptosis. The sequence is that of Apoptosis-enhancing nuclease from Rattus norvegicus (Rat).